A 330-amino-acid polypeptide reads, in one-letter code: DNA-directed RNA polymerase subunit alpha (330 aa).

An alpha N-terminal domain (alpha-NTD) region spans residues 1 to 235 (MQGSVTEFLK…EQLEAFVDLR (235 aa)). Residues 249-330 (FDPILLRPVD…WPPASIADNE (82 aa)) are alpha C-terminal domain (alpha-CTD).

This sequence belongs to the RNA polymerase alpha chain family. As to quaternary structure, homodimer. The RNAP catalytic core consists of 2 alpha, 1 beta, 1 beta' and 1 omega subunit. When a sigma factor is associated with the core the holoenzyme is formed, which can initiate transcription.

It catalyses the reaction RNA(n) + a ribonucleoside 5'-triphosphate = RNA(n+1) + diphosphate. In terms of biological role, DNA-dependent RNA polymerase catalyzes the transcription of DNA into RNA using the four ribonucleoside triphosphates as substrates. This chain is DNA-directed RNA polymerase subunit alpha, found in Yersinia enterocolitica serotype O:8 / biotype 1B (strain NCTC 13174 / 8081).